We begin with the raw amino-acid sequence, 232 residues long: Ubiquinone biosynthesis O-methyltransferase (232 aa).

Arg36, Gly55, Asp76, and Leu120 together coordinate S-adenosyl-L-methionine.

This sequence belongs to the methyltransferase superfamily. UbiG/COQ3 family.

It carries out the reaction a 3-demethylubiquinol + S-adenosyl-L-methionine = a ubiquinol + S-adenosyl-L-homocysteine + H(+). The catalysed reaction is a 3-(all-trans-polyprenyl)benzene-1,2-diol + S-adenosyl-L-methionine = a 2-methoxy-6-(all-trans-polyprenyl)phenol + S-adenosyl-L-homocysteine + H(+). It participates in cofactor biosynthesis; ubiquinone biosynthesis. Functionally, O-methyltransferase that catalyzes the 2 O-methylation steps in the ubiquinone biosynthetic pathway. The polypeptide is Ubiquinone biosynthesis O-methyltransferase (Dechloromonas aromatica (strain RCB)).